A 194-amino-acid chain; its full sequence is A-type ATP synthase subunit E (194 aa).

The protein belongs to the V-ATPase E subunit family. Has multiple subunits with at least A(3), B(3), C, D, E, F, H, I and proteolipid K(x).

Its subcellular location is the cell membrane. Functionally, component of the A-type ATP synthase that produces ATP from ADP in the presence of a proton gradient across the membrane. This is A-type ATP synthase subunit E from Saccharolobus islandicus (strain M.16.27) (Sulfolobus islandicus).